Here is a 290-residue protein sequence, read N- to C-terminus: 4-hydroxybenzoate octaprenyltransferase (290 aa).

The next 8 helical transmembrane spans lie at 23–43 (IGTL…GKGV), 46–66 (LSIL…GCVV), 99–119 (LFVV…AMTI), 141–161 (LPQF…YAAV), 170–190 (WLLL…YAMV), 213–233 (LIVG…GYLT), 234–254 (QMSG…IHQQ), and 268–288 (AFMD…LSYW).

It belongs to the UbiA prenyltransferase family. Mg(2+) serves as cofactor.

Its subcellular location is the cell inner membrane. The catalysed reaction is all-trans-octaprenyl diphosphate + 4-hydroxybenzoate = 4-hydroxy-3-(all-trans-octaprenyl)benzoate + diphosphate. The protein operates within cofactor biosynthesis; ubiquinone biosynthesis. Functionally, catalyzes the prenylation of para-hydroxybenzoate (PHB) with an all-trans polyprenyl group. Mediates the second step in the final reaction sequence of ubiquinone-8 (UQ-8) biosynthesis, which is the condensation of the polyisoprenoid side chain with PHB, generating the first membrane-bound Q intermediate 3-octaprenyl-4-hydroxybenzoate. In Serratia proteamaculans (strain 568), this protein is 4-hydroxybenzoate octaprenyltransferase.